The chain runs to 343 residues: Shematrin-like protein 3 (343 aa).

Positions M1–A16 are cleaved as a signal peptide.

Prismatic layer of shell (at protein level).

The protein resides in the secreted. The chain is Shematrin-like protein 3 from Pinctada maxima (Silver-lipped pearl oyster).